The following is a 696-amino-acid chain: DNA ligase (696 aa).

NAD(+) is bound by residues 36 to 40 (DAEYD), 85 to 86 (SL), and glutamate 123. Catalysis depends on lysine 125, which acts as the N6-AMP-lysine intermediate. 4 residues coordinate NAD(+): arginine 146, glutamate 181, lysine 319, and lysine 343. 4 residues coordinate Zn(2+): cysteine 437, cysteine 440, cysteine 455, and cysteine 461. A BRCT domain is found at 618–696 (PEGTSLAGKT…EDGLKALLGL (79 aa)).

Belongs to the NAD-dependent DNA ligase family. LigA subfamily. Mg(2+) is required as a cofactor. It depends on Mn(2+) as a cofactor.

The catalysed reaction is NAD(+) + (deoxyribonucleotide)n-3'-hydroxyl + 5'-phospho-(deoxyribonucleotide)m = (deoxyribonucleotide)n+m + AMP + beta-nicotinamide D-nucleotide.. Its function is as follows. DNA ligase that catalyzes the formation of phosphodiester linkages between 5'-phosphoryl and 3'-hydroxyl groups in double-stranded DNA using NAD as a coenzyme and as the energy source for the reaction. It is essential for DNA replication and repair of damaged DNA. The sequence is that of DNA ligase from Bordetella parapertussis (strain 12822 / ATCC BAA-587 / NCTC 13253).